The sequence spans 280 residues: Phosphatidylglycerol--prolipoprotein diacylglyceryl transferase (280 aa).

2 helical membrane-spanning segments follow: residues 59–79 and 97–117; these read FLTW…ILFY and GGMS…LFTW. Arg-142 contributes to the a 1,2-diacyl-sn-glycero-3-phospho-(1'-sn-glycerol) binding site. Helical transmembrane passes span 207–227 and 233–253; these read GFLA…CECF and FIGF…PMAI.

This sequence belongs to the Lgt family.

It is found in the cell inner membrane. The catalysed reaction is L-cysteinyl-[prolipoprotein] + a 1,2-diacyl-sn-glycero-3-phospho-(1'-sn-glycerol) = an S-1,2-diacyl-sn-glyceryl-L-cysteinyl-[prolipoprotein] + sn-glycerol 1-phosphate + H(+). It functions in the pathway protein modification; lipoprotein biosynthesis (diacylglyceryl transfer). Its function is as follows. Catalyzes the transfer of the diacylglyceryl group from phosphatidylglycerol to the sulfhydryl group of the N-terminal cysteine of a prolipoprotein, the first step in the formation of mature lipoproteins. This Gluconacetobacter diazotrophicus (strain ATCC 49037 / DSM 5601 / CCUG 37298 / CIP 103539 / LMG 7603 / PAl5) protein is Phosphatidylglycerol--prolipoprotein diacylglyceryl transferase.